The following is a 357-amino-acid chain: GDSL esterase/lipase At5g45950 (357 aa).

Positions 1-23 (MLLVAFVTLLVAVALQPLPSVLS) are cleaved as a signal peptide. Asparagine 37 carries an N-linked (GlcNAc...) asparagine glycan. Residue serine 47 is the Nucleophile of the active site. A glycan (N-linked (GlcNAc...) asparagine) is linked at asparagine 132. Residues aspartate 331 and histidine 334 contribute to the active site.

It belongs to the 'GDSL' lipolytic enzyme family.

The protein resides in the secreted. The sequence is that of GDSL esterase/lipase At5g45950 from Arabidopsis thaliana (Mouse-ear cress).